Reading from the N-terminus, the 96-residue chain is UPF0235 protein YpsIP31758_0827 (96 aa).

This sequence belongs to the UPF0235 family.

The sequence is that of UPF0235 protein YpsIP31758_0827 from Yersinia pseudotuberculosis serotype O:1b (strain IP 31758).